Reading from the N-terminus, the 526-residue chain is Anthranilate synthase component 1 (526 aa).

Residues Ser40 and 304-306 (PYM) each bind L-tryptophan. 341–342 (GT) is a binding site for chorismate. Glu374 provides a ligand contact to Mg(2+). Chorismate is bound by residues Tyr461, Arg481, 495-497 (GAG), and Gly497. Glu510 is a Mg(2+) binding site.

Belongs to the anthranilate synthase component I family. In terms of assembly, heterotetramer consisting of two non-identical subunits: a beta subunit (TrpG) and a large alpha subunit (TrpE). Mg(2+) serves as cofactor.

It catalyses the reaction chorismate + L-glutamine = anthranilate + pyruvate + L-glutamate + H(+). The protein operates within amino-acid biosynthesis; L-tryptophan biosynthesis; L-tryptophan from chorismate: step 1/5. With respect to regulation, feedback inhibited by tryptophan. Part of a heterotetrameric complex that catalyzes the two-step biosynthesis of anthranilate, an intermediate in the biosynthesis of L-tryptophan. In the first step, the glutamine-binding beta subunit (TrpG) of anthranilate synthase (AS) provides the glutamine amidotransferase activity which generates ammonia as a substrate that, along with chorismate, is used in the second step, catalyzed by the large alpha subunit of AS (TrpE) to produce anthranilate. In the absence of TrpG, TrpE can synthesize anthranilate directly from chorismate and high concentrations of ammonia. The chain is Anthranilate synthase component 1 (trpE) from Buchnera aphidicola subsp. Tetraneura caerulescens.